The chain runs to 711 residues: Receptor-like protein 43 (711 aa).

Positions 1-30 (MKGFWNSKSTIRITLSFIFLFISQFSDVLA) are cleaved as a signal peptide. Topologically, residues 31–666 (APTRHLCRPE…EDEEVISWIA (636 aa)) are extracellular. 5 N-linked (GlcNAc...) asparagine glycosylation sites follow: Asn78, Asn114, Asn143, Asn167, and Asn191. LRR repeat units follow at residues 120–143 (LHFL…SIEN), 144–168 (LSHL…IGNL), 170–192 (HLTF…IGNL), 193–216 (SHLT…IGGL), 218–240 (HLTT…IGNL), 241–266 (SNLT…NLSQ), 268–288 (TRLD…LWTL), and 289–316 (PNLF…SMGH). N-linked (GlcNAc...) asparagine glycans are attached at residues Asn239, Asn242, Asn252, and Asn263. Asn295, Asn323, Asn347, Asn362, and Asn372 each carry an N-linked (GlcNAc...) asparagine glycan. An LRR 9; degenerate repeat occupies 317–334 (LLGSNNNFTGKIPSFICE). LRR repeat units follow at residues 335–358 (LRSL…CMGN), 360–384 (KSNL…IFEI), 386–406 (RSLD…LRFF), 407–430 (STLE…LTSL), 431–452 (PKLQ…EASF), 453–476 (LKLR…YFVK), 519–543 (LTIY…IGLL), 544–567 (KELL…MGKL), 568–591 (TALE…IGNL), and 593–616 (FLSC…QFLT). N-linked (GlcNAc...) asparagine glycosylation occurs at Asn420. An N-linked (GlcNAc...) asparagine glycan is attached at Asn466. Asn550, Asn590, and Asn598 each carry an N-linked (GlcNAc...) asparagine glycan. A helical membrane pass occupies residues 667–687 (AAIGFIPGIVLGLTIGYILVF). Over 688–711 (YKPEWFIKTFGRNNCRRRSTTTTH) the chain is Cytoplasmic.

It belongs to the RLP family.

It localises to the cell membrane. In Arabidopsis thaliana (Mouse-ear cress), this protein is Receptor-like protein 43.